The primary structure comprises 270 residues: Phosphatidylglycerol--prolipoprotein diacylglyceryl transferase (270 aa).

The next 7 helical transmembrane spans lie at 10-30 (VAVAIGPLQIHWYGLMYLVGI), 56-76 (LIFWLAMGVIVGGRLGYVLFY), 92-112 (WKGGMAFHGGFVGVMIAAWWF), 120-140 (FFQLMDFVAPLVPIGLGAGRI), 175-195 (SQLYQFALEGVALFIILNLYA), 202-222 (MAVSGMFALFYGIFRFVVEFV), and 237-257 (VTMGQILSLPMIIAGLFLIWL). Residue R139 coordinates a 1,2-diacyl-sn-glycero-3-phospho-(1'-sn-glycerol).

This sequence belongs to the Lgt family.

Its subcellular location is the cell inner membrane. The catalysed reaction is L-cysteinyl-[prolipoprotein] + a 1,2-diacyl-sn-glycero-3-phospho-(1'-sn-glycerol) = an S-1,2-diacyl-sn-glyceryl-L-cysteinyl-[prolipoprotein] + sn-glycerol 1-phosphate + H(+). Its pathway is protein modification; lipoprotein biosynthesis (diacylglyceryl transfer). Functionally, catalyzes the transfer of the diacylglyceryl group from phosphatidylglycerol to the sulfhydryl group of the N-terminal cysteine of a prolipoprotein, the first step in the formation of mature lipoproteins. The chain is Phosphatidylglycerol--prolipoprotein diacylglyceryl transferase from Pseudomonas savastanoi pv. phaseolicola (strain 1448A / Race 6) (Pseudomonas syringae pv. phaseolicola (strain 1448A / Race 6)).